We begin with the raw amino-acid sequence, 94 residues long: MDARDIIKRPVVTEESTSILDDKKYTFEVDTRATKTQVKYAVEEIFDVKVAKVNVMNYKGKLKRMGRYAGYTNKRRKAIVTVTADSKEIQFFEV.

Belongs to the universal ribosomal protein uL23 family. As to quaternary structure, part of the 50S ribosomal subunit. Contacts protein L29, and trigger factor when it is bound to the ribosome.

One of the early assembly proteins it binds 23S rRNA. One of the proteins that surrounds the polypeptide exit tunnel on the outside of the ribosome. Forms the main docking site for trigger factor binding to the ribosome. This Listeria monocytogenes serotype 4b (strain CLIP80459) protein is Large ribosomal subunit protein uL23.